The chain runs to 371 residues: Peptide chain release factor 2 (371 aa).

Gln253 bears the N5-methylglutamine mark.

Belongs to the prokaryotic/mitochondrial release factor family. Methylated by PrmC. Methylation increases the termination efficiency of RF2.

Its subcellular location is the cytoplasm. Peptide chain release factor 2 directs the termination of translation in response to the peptide chain termination codons UGA and UAA. The polypeptide is Peptide chain release factor 2 (prfB) (Mycobacterium bovis (strain ATCC BAA-935 / AF2122/97)).